We begin with the raw amino-acid sequence, 119 residues long: Short coiled-coil protein A (119 aa).

The segment covering 1–10 (MEGDVDEDDG) has biased composition (acidic residues). The segment at 1–26 (MEGDVDEDDGTFTNISLADDSADGEP) is disordered. The stretch at 48–95 (MENQVEQEEKTRLINQVLELQHTLEDLSARVDAVKEENLKLKSENQVL) forms a coiled coil.

This sequence belongs to the SCOC family.

It localises to the golgi apparatus membrane. It is found in the golgi apparatus. The protein resides in the trans-Golgi network. Its subcellular location is the cytoplasm. The protein localises to the cytosol. In terms of biological role, positive regulator of amino acid starvation-induced autophagy. The polypeptide is Short coiled-coil protein A (scoca) (Danio rerio (Zebrafish)).